The following is an 881-amino-acid chain: Alanine--tRNA ligase (881 aa).

The segment covering 422-440 (FEDEMQKQKERARSARSTE) has biased composition (basic and acidic residues). The disordered stretch occupies residues 422-445 (FEDEMQKQKERARSARSTEKSMGV). Histidine 567, histidine 571, cysteine 669, and histidine 673 together coordinate Zn(2+).

Belongs to the class-II aminoacyl-tRNA synthetase family. Requires Zn(2+) as cofactor.

The protein localises to the cytoplasm. It carries out the reaction tRNA(Ala) + L-alanine + ATP = L-alanyl-tRNA(Ala) + AMP + diphosphate. Its function is as follows. Catalyzes the attachment of alanine to tRNA(Ala) in a two-step reaction: alanine is first activated by ATP to form Ala-AMP and then transferred to the acceptor end of tRNA(Ala). Also edits incorrectly charged Ser-tRNA(Ala) and Gly-tRNA(Ala) via its editing domain. This chain is Alanine--tRNA ligase, found in Pediococcus pentosaceus (strain ATCC 25745 / CCUG 21536 / LMG 10740 / 183-1w).